Consider the following 162-residue polypeptide: Serine-protein kinase RsbW (162 aa).

This sequence belongs to the anti-sigma-factor family.

It carries out the reaction L-seryl-[protein] + ATP = O-phospho-L-seryl-[protein] + ADP + H(+). The enzyme catalyses L-threonyl-[protein] + ATP = O-phospho-L-threonyl-[protein] + ADP + H(+). Its function is as follows. Negative regulator of sigma-B activity. Phosphorylates and inactivates its specific antagonist protein, RsbV. Upon phosphorylation of RsbV, RsbW is released and binds to sigma-B, thereby blocking its ability to form an RNA polymerase holoenzyme (E-sigma-B). This chain is Serine-protein kinase RsbW, found in Bacillus pumilus (strain SAFR-032).